Consider the following 290-residue polypeptide: Ribosomal RNA small subunit methyltransferase A (290 aa).

Positions 27, 29, 54, 75, 100, and 125 each coordinate S-adenosyl-L-methionine.

The protein belongs to the class I-like SAM-binding methyltransferase superfamily. rRNA adenine N(6)-methyltransferase family. RsmA subfamily.

It is found in the cytoplasm. It carries out the reaction adenosine(1518)/adenosine(1519) in 16S rRNA + 4 S-adenosyl-L-methionine = N(6)-dimethyladenosine(1518)/N(6)-dimethyladenosine(1519) in 16S rRNA + 4 S-adenosyl-L-homocysteine + 4 H(+). In terms of biological role, specifically dimethylates two adjacent adenosines (A1518 and A1519) in the loop of a conserved hairpin near the 3'-end of 16S rRNA in the 30S particle. May play a critical role in biogenesis of 30S subunits. In Streptococcus pneumoniae (strain ATCC BAA-255 / R6), this protein is Ribosomal RNA small subunit methyltransferase A.